The primary structure comprises 161 residues: Dihydrofolate reductase (161 aa).

The DHFR domain occupies 2–161 (NISLIAAISK…YNYSFEILSR (160 aa)). Position 6–8 (6–8 (IAA)) interacts with substrate. Residues 7–8 (AA) and 15–20 (IGYKNK) each bind NADP(+). Aspartate 28 lines the substrate pocket. An NADP(+)-binding site is contributed by 44–47 (GRLT). Arginine 59 provides a ligand contact to substrate. NADP(+) contacts are provided by residues 64–66 (ISS) and 96–101 (IGGAKI). Threonine 115 lines the substrate pocket.

It belongs to the dihydrofolate reductase family.

It carries out the reaction (6S)-5,6,7,8-tetrahydrofolate + NADP(+) = 7,8-dihydrofolate + NADPH + H(+). It participates in cofactor biosynthesis; tetrahydrofolate biosynthesis; 5,6,7,8-tetrahydrofolate from 7,8-dihydrofolate: step 1/1. Key enzyme in folate metabolism. Catalyzes an essential reaction for de novo glycine and purine synthesis, and for DNA precursor synthesis. In Buchnera aphidicola subsp. Acyrthosiphon pisum (strain APS) (Acyrthosiphon pisum symbiotic bacterium), this protein is Dihydrofolate reductase (folA).